The chain runs to 421 residues: MDLEAKVKKMGLGHEQGFGAPCLKCKEKCEGFELHFWRKICRNCKCGQEEHDVLLSNEEDRKVGKLFEDTKYTTLIAKLKSDGIPMYKRNVMILTNPVAAKKNISINTVTYEWAPPVQNQALARQYMQMLPKEKQPVAGSEGAQYRKKQLAKQLPAHDQDPSKCHELSPKEVKEMEQFVKKYKSEALGVGDVKLPREMNAQGPNRMCIPGGDRSTTSAVGAMEDKSAEHKTTQYSCYCCKLSMKEGDPAIYAERAGYDKLWHPACFVCSTCHELLVDMIYFWKNDKLYCGRHYCDSEKPRCAGCDELIFSNEYTQAENQNWHLKHFCCFDCDNILAGEIYVMVNDKPVCKPCYVKNHAVVCQGCHNAIDPEVQRVTYNNFSWHASTECFLCSCCSKCLIGQKFMPVEGMVFCSVECKKMMS.

The PET domain occupies 92 to 199 (MILTNPVAAK…GDVKLPREMN (108 aa)). Positions 133–164 (EKQPVAGSEGAQYRKKQLAKQLPAHDQDPSKC) are disordered. Residues 155-164 (PAHDQDPSKC) are compositionally biased toward basic and acidic residues. LIM zinc-binding domains follow at residues 234 to 297 (YSCY…CDSE), 299 to 359 (PRCA…NHAV), and 362 to 421 (QGCH…KMMS).

Belongs to the prickle / espinas / testin family. As to quaternary structure, interacts via LIM domain 1 with ZYX. Interacts (via LIM domain 3) with ENAH and VASP. Interacts with ALKBH4, talin, actin, alpha-actinin, GRIP1 and PXN. Interacts (via LIM domain 2) with ACTL7A (via N-terminus). Heterodimer with ACTL7A; the heterodimer interacts with ENAH to form a heterotrimer.

The protein resides in the cytoplasm. The protein localises to the cell junction. It is found in the focal adhesion. Functionally, scaffold protein that may play a role in cell adhesion, cell spreading and in the reorganization of the actin cytoskeleton. Plays a role in the regulation of cell proliferation. May act as a tumor suppressor. This is Testin (TES) from Sus scrofa (Pig).